Reading from the N-terminus, the 270-residue chain is Tryptophan synthase alpha chain (270 aa).

Active-site proton acceptor residues include Glu49 and Asp60.

The protein belongs to the TrpA family. Tetramer of two alpha and two beta chains.

It catalyses the reaction (1S,2R)-1-C-(indol-3-yl)glycerol 3-phosphate + L-serine = D-glyceraldehyde 3-phosphate + L-tryptophan + H2O. The protein operates within amino-acid biosynthesis; L-tryptophan biosynthesis; L-tryptophan from chorismate: step 5/5. In terms of biological role, the alpha subunit is responsible for the aldol cleavage of indoleglycerol phosphate to indole and glyceraldehyde 3-phosphate. This Thermobifida fusca (strain YX) protein is Tryptophan synthase alpha chain.